The sequence spans 185 residues: AP-3 complex subunit sigma (185 aa).

Belongs to the adaptor complexes small subunit family. Adaptor protein complex 3 (AP-3) is a heterotetramer composed of 2 large adaptins (APL5 and APL6), a medium adaptin (APM3) and a small adaptin (APS3).

It is found in the golgi apparatus. The protein resides in the cytoplasmic vesicle membrane. Functionally, part of the AP-3 complex, an adaptor-related complex which is not clathrin-associated. The complex is associated with the Golgi region as well as more peripheral structures. It facilitates the budding of vesicles from the Golgi membrane and may be directly involved in trafficking to the vacuole. The sequence is that of AP-3 complex subunit sigma (APS3) from Eremothecium gossypii (strain ATCC 10895 / CBS 109.51 / FGSC 9923 / NRRL Y-1056) (Yeast).